The chain runs to 298 residues: Iron/alpha-ketoglutarate-dependent dioxygenase ausO (298 aa).

Residues His-130, Asp-132, and His-211 each contribute to the Fe cation site.

It belongs to the PhyH family. In terms of assembly, homodimer. Fe cation is required as a cofactor.

Its pathway is secondary metabolite biosynthesis; terpenoid biosynthesis. Iron/alpha-ketoglutarate-dependent dioxygenase; part of the gene cluster that mediates the biosynthesis of calidodehydroaustin, a fungal meroterpenoid. The first step of the pathway is the synthesis of 3,5-dimethylorsellinic acid by the polyketide synthase ausA. 3,5-dimethylorsellinic acid is then prenylated by the polyprenyl transferase ausN. Further epoxidation by the FAD-dependent monooxygenase ausM and cyclization by the probable terpene cyclase ausL lead to the formation of protoaustinoid A. Protoaustinoid A is then oxidized to spiro-lactone preaustinoid A3 by the combined action of the FAD-binding monooxygenases ausB and ausC, and the dioxygenase ausE. Acid-catalyzed keto-rearrangement and ring contraction of the tetraketide portion of preaustinoid A3 by ausJ lead to the formation of preaustinoid A4. The aldo-keto reductase ausK, with the help of ausH, is involved in the next step by transforming preaustinoid A4 into isoaustinone which is in turn hydroxylated by the P450 monooxygenase ausI to form austinolide. The cytochrome P450 monooxygenase ausG modifies austinolide to austinol. Austinol is further acetylated to austin by the O-acetyltransferase ausP, which spontaneously changes to dehydroaustin. The cytochrome P450 monooxygenase ausR then converts dehydroaustin is into 7-dehydrodehydroaustin. The hydroxylation catalyzed by ausR permits the O-acetyltransferase ausQ to add an additional acetyl group to the molecule, leading to the formation of acetoxydehydroaustin. The short chain dehydrogenase ausT catalyzes the reduction of the double bond present between carbon atoms 1 and 2 to convert 7-dehydrodehydroaustin into 1,2-dihydro-7-hydroxydehydroaustin. AusQ catalyzes not only an acetylation reaction but also the addition of the PKS ausV diketide product to 1,2-dihydro-7-hydroxydehydroaustin, forming precalidodehydroaustin. Finally, the iron/alpha-ketoglutarate-dependent dioxygenase converts precalidodehydroaustin into calidodehydroaustin. This Aspergillus calidoustus protein is Iron/alpha-ketoglutarate-dependent dioxygenase ausO.